We begin with the raw amino-acid sequence, 1405 residues long: MKDLLKFLKQQSKTEEFNGIKIGLASPDLIRSWSFGEVKKPETINYRTFKPEREGLFCARIFGPVKDYECLCGKYKRLKHRGVICEKCGVEVTQTKVRRERMGHIELASPVAHIWFLKSLPSRIGLMLDMTLRDIERVLYFESFVVIEPGMTSLERGQMLTEENYLDALEEYGDEFEAKMGAEAVLELLRAIDLEKEIEQMREELPSINSETRRKKVTKRLKLMEAFHTSGNKPEWMILKVLPVLPPDLRPLVPLDGGRFATSDLNDLYRRVINRNNRLKRLLDLAAPDIIVRNEKRMLQESVDALLDNGRRGRAITGSNKRPLKSLADMIKGKQGRFRQNLLGKRVDYSGRSVITVGPTLRLHQCGLPKKMALELFKPFIYGKLEGRGLATTIKAAKKMVEREVAEVWDVLDEVIREHPVMLNRAPTLHRLGIQAFEPVLIEGKAIQLHPLVCAAYNADFDGDQMAVHVPLTLEAQLEARALMMSTNNILSPANGEPVITPSQDVVLGLYYTSRERINGRGEGMYFMSVAEVEKAYATGAAELHARVKVRITETVIGDNGERTEQRRIVDTTVGRALLSQILPAGLSFDLVNQNMGKKQISKLLNTCYRQLGLKDTVIFADQLMYTGFRYATISGASVGIDDMVIPAEKYTLVADAEAEVLEIQEQFQSGLVTAGERYNKVIDIWASANEKVSKAMMENLSTETVINRDGVEEKQASFNSIYMMADSGARGSAAQIRQLAGMRGLMAKPDGSIIETPIVANFREGLNVLQYFISTHGARKGLADTALKTANSGYLTRRLVDVAQDLVVIEDDCGTHEGLTMKPLIEGGDVVEPLRERVLGRVVAVDVMYPGTEDVLAPRNTLLDEAWCDKLEEHSIDEVIVRSVITCDTDFGVCAACYGRDLARGHLINHGEAIGVVAAQSIGEPGTQLTMRTFHIGGAASRASAENNVQVKNSGSLKLHNAKYVTNTDGKLVIVSRSSELAIIDELGREKERYKVPYGTVLEKLEEASVEAGDIIANWDPHTHPIITEVAGSIKFVDMIDGVTMTRQTDELTGLSSIVILDVGQRGSAGKEMRPMIRLVGADGSDLMIPGTEVPAQYFLPGSAIVNLDDNAQIAVGDALARIPQESSKTRDITGGLPRVADLFEARKPKEPAILAEISGTISFGKETKGKRRLVITPADGGEQYEEMIPKWRNLNVFEGEKVERGEVIADGPEAAHDILRLRGIHNVANYIVNEVQDVYRLQGVKINDKHIEVIIRQMLRKCVITSAGDSEFLEGEQVEVSRVKIANRELVEQGKVPATFERELLGITKASLATESFISAASFQETTRVLTEAAVGGKSDNLRGLKENVIVGRLIPAGTGYAYHKTRNDARAKKDEPVVVNKITASEAEQNLADLLNLAGSQD.

Cys70, Cys72, Cys85, and Cys88 together coordinate Zn(2+). Residues Asp460, Asp462, and Asp464 each contribute to the Mg(2+) site. Residues Cys814, Cys888, Cys895, and Cys898 each coordinate Zn(2+).

The protein belongs to the RNA polymerase beta' chain family. The RNAP catalytic core consists of 2 alpha, 1 beta, 1 beta' and 1 omega subunit. When a sigma factor is associated with the core the holoenzyme is formed, which can initiate transcription. Requires Mg(2+) as cofactor. Zn(2+) is required as a cofactor.

It catalyses the reaction RNA(n) + a ribonucleoside 5'-triphosphate = RNA(n+1) + diphosphate. DNA-dependent RNA polymerase catalyzes the transcription of DNA into RNA using the four ribonucleoside triphosphates as substrates. This Shewanella sp. (strain MR-7) protein is DNA-directed RNA polymerase subunit beta'.